A 66-amino-acid polypeptide reads, in one-letter code: Ribosome biogenesis protein Nop10 (66 aa).

It belongs to the NOP10 family.

Its function is as follows. Involved in ribosome biogenesis; more specifically in 18S rRNA pseudouridylation and in cleavage of pre-rRNA. In Staphylothermus marinus (strain ATCC 43588 / DSM 3639 / JCM 9404 / F1), this protein is Ribosome biogenesis protein Nop10.